A 113-amino-acid polypeptide reads, in one-letter code: Cell division protein FtsB (113 aa).

At M1–L3 the chain is on the cytoplasmic side. A helical transmembrane segment spans residues I4–L21. Over G22–H113 the chain is Periplasmic. Residues H34–G63 are a coiled coil. The interval K93–H113 is disordered.

This sequence belongs to the FtsB family. In terms of assembly, part of a complex composed of FtsB, FtsL and FtsQ.

The protein localises to the cell inner membrane. Functionally, essential cell division protein. May link together the upstream cell division proteins, which are predominantly cytoplasmic, with the downstream cell division proteins, which are predominantly periplasmic. The chain is Cell division protein FtsB from Cupriavidus pinatubonensis (strain JMP 134 / LMG 1197) (Cupriavidus necator (strain JMP 134)).